We begin with the raw amino-acid sequence, 89 residues long: Small ribosomal subunit protein uS15 (89 aa).

The protein belongs to the universal ribosomal protein uS15 family. As to quaternary structure, part of the 30S ribosomal subunit. Forms a bridge to the 50S subunit in the 70S ribosome, contacting the 23S rRNA.

Its function is as follows. One of the primary rRNA binding proteins, it binds directly to 16S rRNA where it helps nucleate assembly of the platform of the 30S subunit by binding and bridging several RNA helices of the 16S rRNA. Functionally, forms an intersubunit bridge (bridge B4) with the 23S rRNA of the 50S subunit in the ribosome. In Tolumonas auensis (strain DSM 9187 / NBRC 110442 / TA 4), this protein is Small ribosomal subunit protein uS15.